The primary structure comprises 187 residues: Elongation factor P (187 aa).

An N6-(3,6-diaminohexanoyl)-5-hydroxylysine modification is found at K34.

This sequence belongs to the elongation factor P family. In terms of processing, may be beta-lysylated on the epsilon-amino group of Lys-34 by the combined action of EpmA and EpmB, and then hydroxylated on the C5 position of the same residue by EpmC (if this protein is present). Lysylation is critical for the stimulatory effect of EF-P on peptide-bond formation. The lysylation moiety may extend toward the peptidyltransferase center and stabilize the terminal 3-CCA end of the tRNA. Hydroxylation of the C5 position on Lys-34 may allow additional potential stabilizing hydrogen-bond interactions with the P-tRNA.

It is found in the cytoplasm. It functions in the pathway protein biosynthesis; polypeptide chain elongation. Involved in peptide bond synthesis. Alleviates ribosome stalling that occurs when 3 or more consecutive Pro residues or the sequence PPG is present in a protein, possibly by augmenting the peptidyl transferase activity of the ribosome. Modification of Lys-34 is required for alleviation. The sequence is that of Elongation factor P from Vesicomyosocius okutanii subsp. Calyptogena okutanii (strain HA).